A 361-amino-acid polypeptide reads, in one-letter code: UPF0283 membrane protein mlr0776 (361 aa).

Residues 1-33 (MTAPRKPAAFRIEPEAAPTQETPKARQAELSRK) are disordered. Positions 23–32 (PKARQAELSR) are enriched in basic and acidic residues. The next 2 membrane-spanning stretches (helical) occupy residues 73-93 (LFGSIFFGAIGVLVSLAVGLW) and 108-128 (LGWLAAGMAAIAVLALVVILI).

Belongs to the UPF0283 family.

The protein resides in the cell inner membrane. The chain is UPF0283 membrane protein mlr0776 from Mesorhizobium japonicum (strain LMG 29417 / CECT 9101 / MAFF 303099) (Mesorhizobium loti (strain MAFF 303099)).